Here is a 115-residue protein sequence, read N- to C-terminus: Na(+)/H(+) antiporter subunit C1 (115 aa).

The next 3 helical transmembrane spans lie at 1–21 (MEIL…YLIL), 28–48 (IIIG…TMGG), and 72–92 (LILT…VLAF).

Belongs to the CPA3 antiporters (TC 2.A.63) subunit C family. In terms of assembly, may form a heterooligomeric complex that consists of seven subunits: mnhA1, mnhB1, mnhC1, mnhD1, mnhE1, mnhF1 and mnhG1.

Its subcellular location is the cell membrane. Functionally, mnh complex is a Na(+)/H(+) antiporter involved in Na(+) excretion. The sequence is that of Na(+)/H(+) antiporter subunit C1 (mnhC1) from Staphylococcus saprophyticus subsp. saprophyticus (strain ATCC 15305 / DSM 20229 / NCIMB 8711 / NCTC 7292 / S-41).